The primary structure comprises 339 residues: Zinc metalloprotease MJ0392 (339 aa).

2 consecutive transmembrane segments (helical) span residues isoleucine 10–glycine 30 and isoleucine 33–leucine 53. Histidine 54 contributes to the Zn(2+) binding site. The active site involves glutamate 55. Residue histidine 58 participates in Zn(2+) binding. 2 helical membrane-spanning segments follow: residues isoleucine 96 to phenylalanine 116 and leucine 125 to phenylalanine 145. Residue aspartate 148 participates in Zn(2+) binding. 2 helical membrane passes run isoleucine 180–valine 200 and tyrosine 251–isoleucine 271. 2 consecutive CBS domains span residues methionine 226–tyrosine 281 and tyrosine 281–glutamate 335.

The protein belongs to the peptidase M50B family. In terms of assembly, monomer. Zn(2+) serves as cofactor.

It localises to the cell membrane. Inhibited by 1,10-phenanthroline. A site-2 regulated intramembrane protease (S2P) that cleaves type-2 transmembrane proteins within their membrane-spanning domains; its endogenous substrate is unknown. Regulated intramembrane proteolysis (RIP) occurs when an extracytoplasmic signal triggers a concerted proteolytic cascade to transmit information and elicit cellular responses. A membrane-spanning regulatory substrate protein is first cut extracytoplasmically (site-1 protease, S1P), then within the membrane itself (site-2 protease, S2P, this enzyme), while cytoplasmic proteases finish degrading the regulatory protein, liberating the effector protein. Possible signals, S1P and substrates are unknown in this organism. This is Zinc metalloprotease MJ0392 from Methanocaldococcus jannaschii (strain ATCC 43067 / DSM 2661 / JAL-1 / JCM 10045 / NBRC 100440) (Methanococcus jannaschii).